A 734-amino-acid polypeptide reads, in one-letter code: Photosystem I P700 chlorophyll a apoprotein A2 (734 aa).

8 consecutive transmembrane segments (helical) span residues Ile46–Ala69, Leu135–Gln158, Leu175–Ile199, Met273–Tyr291, Leu330–Tyr353, Ala369–Ile395, Ala417–His439, and Phe517–Val535. Residues Cys559 and Cys568 each contribute to the [4Fe-4S] cluster site. The next 2 membrane-spanning stretches (helical) occupy residues Ala575–Trp596 and Leu643–Ile665. Chlorophyll a contacts are provided by His654, Met662, and Tyr670. Trp671 provides a ligand contact to phylloquinone. Residues Leu707–Ala727 traverse the membrane as a helical segment.

Belongs to the PsaA/PsaB family. As to quaternary structure, the PsaA/B heterodimer binds the P700 chlorophyll special pair and subsequent electron acceptors. PSI consists of a core antenna complex that captures photons, and an electron transfer chain that converts photonic excitation into a charge separation. The eukaryotic PSI reaction center is composed of at least 11 subunits. P700 is a chlorophyll a/chlorophyll a' dimer, A0 is one or more chlorophyll a, A1 is one or both phylloquinones and FX is a shared 4Fe-4S iron-sulfur center. is required as a cofactor.

Its subcellular location is the plastid. It localises to the chloroplast thylakoid membrane. It catalyses the reaction reduced [plastocyanin] + hnu + oxidized [2Fe-2S]-[ferredoxin] = oxidized [plastocyanin] + reduced [2Fe-2S]-[ferredoxin]. Functionally, psaA and PsaB bind P700, the primary electron donor of photosystem I (PSI), as well as the electron acceptors A0, A1 and FX. PSI is a plastocyanin-ferredoxin oxidoreductase, converting photonic excitation into a charge separation, which transfers an electron from the donor P700 chlorophyll pair to the spectroscopically characterized acceptors A0, A1, FX, FA and FB in turn. Oxidized P700 is reduced on the lumenal side of the thylakoid membrane by plastocyanin. The sequence is that of Photosystem I P700 chlorophyll a apoprotein A2 from Antirrhinum majus (Garden snapdragon).